The primary structure comprises 136 residues: Class I hydrophobin A (136 aa).

An N-terminal signal peptide occupies residues 1–16 (MRFALAITTLIAAVTA). 4 disulfide bridges follow: Cys39–Cys109, Cys47–Cys103, Cys48–Cys85, and Cys110–Cys128.

This sequence belongs to the fungal hydrophobin family. In terms of tissue distribution, expressed in aerial conidia, in vitro blastospores, submerged conidia, and cells sporulating on chitin and insect cuticle, with hyd1 expression peaking in growing mycelia.

It is found in the secreted. Its subcellular location is the cell wall. The protein resides in the spore coat. It localises to the vacuole. The protein localises to the cytoplasmic vesicle. Aerial growth, conidiation, and dispersal of filamentous fungi in the environment rely upon a capability of their secreting small amphipathic proteins called hydrophobins (HPBs) with low sequence identity. Class I can self-assemble into an outermost layer of rodlet bundles on aerial cell surfaces, conferring cellular hydrophobicity that supports fungal growth, development and dispersal; whereas Class II form highly ordered films at water-air interfaces through intermolecular interactions but contribute nothing to the rodlet structure. Hyd1A contributes to certain cell wall-related features, such as hydrophobicity but is not involved in cell wall-related events during fungal proliferation in host hemocoel. Hyd1A and hyd1B coregulate the formation, morphology and orderly assembly of rodlet bundles required for conidial hydrophobicity and infectivity. Contributes to the spore coat rodlet layer. The sequence is that of Class I hydrophobin A from Beauveria bassiana (strain ARSEF 2860) (White muscardine disease fungus).